A 251-amino-acid chain; its full sequence is 5'-nucleotidase SurE 1 (251 aa).

A divalent metal cation-binding residues include Asp8, Asp9, Ser39, and Asn95.

The protein belongs to the SurE nucleotidase family. It depends on a divalent metal cation as a cofactor.

Its subcellular location is the cytoplasm. The catalysed reaction is a ribonucleoside 5'-phosphate + H2O = a ribonucleoside + phosphate. In terms of biological role, nucleotidase that shows phosphatase activity on nucleoside 5'-monophosphates. The protein is 5'-nucleotidase SurE 1 of Thermus thermophilus (strain ATCC BAA-163 / DSM 7039 / HB27).